Here is a 211-residue protein sequence, read N- to C-terminus: Transcriptional regulatory protein LiaR (211 aa).

One can recognise a Response regulatory domain in the interval 3–119 (RVLLIDDHEM…EIADAIRAAS (117 aa)). Residue D54 is modified to 4-aspartylphosphate. One can recognise an HTH luxR-type domain in the interval 143-208 (NALPHESLTK…QAAVYAHRNH (66 aa)). The segment at residues 167-186 (NKEIGEELFITIKTVKTHIT) is a DNA-binding region (H-T-H motif).

Phosphorylated by LiaS.

It is found in the cytoplasm. Member of the two-component regulatory system LiaS/LiaR probably involved in response to a subset of cell wall-active antibiotics that interfere with the lipid II cycle in the cytoplasmic membrane (bacitracin, nisin, ramoplanin and vancomycin). Also seems to be involved in response to cationic antimicrobial peptides and secretion stress. LiaR regulates the transcription of the liaIHGFSR operon. This Bacillus subtilis (strain 168) protein is Transcriptional regulatory protein LiaR (liaR).